A 271-amino-acid polypeptide reads, in one-letter code: Formamidopyrimidine-DNA glycosylase (271 aa).

Pro2 acts as the Schiff-base intermediate with DNA in catalysis. Residue Glu3 is the Proton donor of the active site. Catalysis depends on Lys56, which acts as the Proton donor; for beta-elimination activity. Residues His89, Arg107, and Arg151 each contribute to the DNA site. An FPG-type zinc finger spans residues 236 to 270 (MVYARQGQPCRVCATPIKSLRQGQRSTFYCPHCQK). The active-site Proton donor; for delta-elimination activity is the Arg260.

Belongs to the FPG family. Monomer. It depends on Zn(2+) as a cofactor.

It carries out the reaction Hydrolysis of DNA containing ring-opened 7-methylguanine residues, releasing 2,6-diamino-4-hydroxy-5-(N-methyl)formamidopyrimidine.. It catalyses the reaction 2'-deoxyribonucleotide-(2'-deoxyribose 5'-phosphate)-2'-deoxyribonucleotide-DNA = a 3'-end 2'-deoxyribonucleotide-(2,3-dehydro-2,3-deoxyribose 5'-phosphate)-DNA + a 5'-end 5'-phospho-2'-deoxyribonucleoside-DNA + H(+). Functionally, involved in base excision repair of DNA damaged by oxidation or by mutagenic agents. Acts as a DNA glycosylase that recognizes and removes damaged bases. Has a preference for oxidized purines, such as 7,8-dihydro-8-oxoguanine (8-oxoG). Has AP (apurinic/apyrimidinic) lyase activity and introduces nicks in the DNA strand. Cleaves the DNA backbone by beta-delta elimination to generate a single-strand break at the site of the removed base with both 3'- and 5'-phosphates. The chain is Formamidopyrimidine-DNA glycosylase from Albidiferax ferrireducens (strain ATCC BAA-621 / DSM 15236 / T118) (Rhodoferax ferrireducens).